We begin with the raw amino-acid sequence, 829 residues long: Periplasmic nitrate reductase (829 aa).

Positions 1–31 (MKLSRRDFMKANAVAAAAAAAGLTIPTVARA) form a signal peptide, tat-type signal. The 4Fe-4S Mo/W bis-MGD-type domain occupies 40 to 96 (ITWDKAPCRFCGTGCGVLVGTQNGRIVASQGDPDAPVNRGLNCIKGYFLPKIMYGKD). Residues cysteine 47, cysteine 50, cysteine 54, and cysteine 82 each coordinate [4Fe-4S] cluster. Mo-bis(molybdopterin guanine dinucleotide)-binding positions include lysine 84, glutamine 151, asparagine 176, cysteine 180, 213–220 (WGSNMAEM), 263–265 (QSD), methionine 373, glutamine 377, asparagine 483, 509–510 (SD), lysine 532, aspartate 559, and 719–728 (TGRVLEHWHT). Substrate is bound at residue phenylalanine 795. Asparagine 803 and lysine 820 together coordinate Mo-bis(molybdopterin guanine dinucleotide).

Belongs to the prokaryotic molybdopterin-containing oxidoreductase family. NasA/NapA/NarB subfamily. Component of the periplasmic nitrate reductase NapAB complex composed of NapA and NapB. [4Fe-4S] cluster is required as a cofactor. Requires Mo-bis(molybdopterin guanine dinucleotide) as cofactor. Predicted to be exported by the Tat system. The position of the signal peptide cleavage has not been experimentally proven.

The protein localises to the periplasm. It catalyses the reaction 2 Fe(II)-[cytochrome] + nitrate + 2 H(+) = 2 Fe(III)-[cytochrome] + nitrite + H2O. Catalytic subunit of the periplasmic nitrate reductase complex NapAB. Receives electrons from NapB and catalyzes the reduction of nitrate to nitrite. This Edwardsiella ictaluri (strain 93-146) protein is Periplasmic nitrate reductase.